A 181-amino-acid chain; its full sequence is Isopentenyl-diphosphate Delta-isomerase (181 aa).

Positions 25 and 32 each coordinate Mn(2+). Residues 30–164 form the Nudix hydrolase domain; the sequence is LLHLAFSCWL…PWAFSPWMVL (135 aa). Cys67 is an active-site residue. His69 is a binding site for Mn(2+). Glu87 serves as a coordination point for Mg(2+). Mn(2+) contacts are provided by Glu114 and Glu116. The active site involves Glu116.

The protein belongs to the IPP isomerase type 1 family. As to quaternary structure, homodimer. Mg(2+) is required as a cofactor. Requires Mn(2+) as cofactor.

The protein localises to the cytoplasm. The enzyme catalyses isopentenyl diphosphate = dimethylallyl diphosphate. The protein operates within isoprenoid biosynthesis; dimethylallyl diphosphate biosynthesis; dimethylallyl diphosphate from isopentenyl diphosphate: step 1/1. Its function is as follows. Catalyzes the 1,3-allylic rearrangement of the homoallylic substrate isopentenyl (IPP) to its highly electrophilic allylic isomer, dimethylallyl diphosphate (DMAPP). The protein is Isopentenyl-diphosphate Delta-isomerase of Citrobacter koseri (strain ATCC BAA-895 / CDC 4225-83 / SGSC4696).